Reading from the N-terminus, the 54-residue chain is uncharacterized protein (54 aa).

This is an uncharacterized protein from Bacillus subtilis (strain 168).